The following is a 459-amino-acid chain: Glutamate--tRNA ligase 2 (459 aa).

The 'HIGH' region motif lies at 8 to 18; sequence PSPTGYLHIGG. The 'KMSKS' region motif lies at 237-241; the sequence is KLSKR. K240 provides a ligand contact to ATP.

It belongs to the class-I aminoacyl-tRNA synthetase family. Glutamate--tRNA ligase type 1 subfamily. Monomer.

The protein localises to the cytoplasm. The catalysed reaction is tRNA(Glu) + L-glutamate + ATP = L-glutamyl-tRNA(Glu) + AMP + diphosphate. Functionally, catalyzes the attachment of glutamate to tRNA(Glu) in a two-step reaction: glutamate is first activated by ATP to form Glu-AMP and then transferred to the acceptor end of tRNA(Glu). The sequence is that of Glutamate--tRNA ligase 2 from Campylobacter curvus (strain 525.92).